The following is a 230-amino-acid chain: MSERAPVVTIDGPSGAGKGTISQLLAQHLGWQLLDSGAIYRVLALAAIHHDVELENEESITLLAAHLDVKFLTGNDKDPVQVILEGEDVTTDIRTQECSNAASKVAAFPRVREALLRRQRAFRTAPGLIADGRDMGTVVFPTAPAKLYLTASAEERAQRRYNQLQDKGFDVNIERLLSEIIERDERDMNRPVAPLVPAEDAFVIDTSGKGIDEVLELALKHINEKLSSAN.

12 to 20 (GPSGAGKGT) serves as a coordination point for ATP.

The protein belongs to the cytidylate kinase family. Type 1 subfamily.

It is found in the cytoplasm. It catalyses the reaction CMP + ATP = CDP + ADP. It carries out the reaction dCMP + ATP = dCDP + ADP. This Shewanella sp. (strain W3-18-1) protein is Cytidylate kinase.